A 152-amino-acid chain; its full sequence is MKAICIVAGEASGRIYFKQGAPDEPVSITGYLLNLPRGLHGFHVHEFGDTSNGCTSAGEHFNPTRQRHGAPDAAERHVGDLGNVRSAGCTALTAIHMSDNVITLFGPLSILGRSLVVHTDRDDLGLGEHPLSKTTGNSGGRLGCGIIGVCAN.

Residues H43, H45, and H60 each coordinate Cu cation. Residues C54 and C144 are joined by a disulfide bond. 4 residues coordinate Zn(2+): H60, H68, H77, and D80. Residue H118 coordinates Cu cation.

Belongs to the Cu-Zn superoxide dismutase family. The cofactor is Cu cation. Zn(2+) serves as cofactor.

The catalysed reaction is 2 superoxide + 2 H(+) = H2O2 + O2. Its function is as follows. Destroys radicals which are normally produced within the cells and which are toxic to biological systems. This is Putative superoxide dismutase [Cu-Zn] (SOD) from Orgyia pseudotsugata (Douglas-fir tussock moth).